Reading from the N-terminus, the 32-residue chain is U21-ctenitoxin-Co1a (32 aa).

3 disulfide bridges follow: C3-C17, C10-C21, and C16-C30.

In terms of tissue distribution, expressed by the venom gland.

Its subcellular location is the secreted. In terms of biological role, not toxic to mice by intracerebroventricular injection. In Ctenus ornatus (Brazilian spider), this protein is U21-ctenitoxin-Co1a.